The sequence spans 209 residues: Regulator of G-protein signaling 1 (209 aa).

Positions 85–200 (SLEKLLANQT…LKSDIYLNLL (116 aa)) constitute an RGS domain.

As to quaternary structure, interacts with GNAI1 and GNAQ. In terms of tissue distribution, detected in peripheral blood monocytes. Expression is relatively low in B-cells and chronic lymphocytic leukemia B-cells; however, in other types of malignant B-cell such as non-Hodgkin lymphoma and hairy cell leukemia, expression is constitutively high.

The protein localises to the cell membrane. Its subcellular location is the cytoplasm. The protein resides in the cytosol. Regulates G protein-coupled receptor signaling cascades, including signaling downstream of the N-formylpeptide chemoattractant receptors and leukotriene receptors. Inhibits B cell chemotaxis toward CXCL12. Inhibits signal transduction by increasing the GTPase activity of G protein alpha subunits thereby driving them into their inactive GDP-bound form. The polypeptide is Regulator of G-protein signaling 1 (RGS1) (Homo sapiens (Human)).